The chain runs to 810 residues: Protein kinase C-binding protein NELL1 (810 aa).

The signal sequence occupies residues 1–21 (MPMDLILVVWFCVCTARTVVG). Residues Asn40, Asn53, Asn83, Asn224, Asn294, and Asn372 are each glycosylated (N-linked (GlcNAc...) asparagine). Positions 64-227 (EREIHAAPHV…TQCPNLNHTC (164 aa)) constitute a Laminin G-like domain. Positions 271 to 332 (KTCQVSGLLY…IAGQCCKVCR (62 aa)) constitute a VWFC 1 domain. 3 cysteine pairs are disulfide-bonded: Cys395–Cys407, Cys401–Cys416, and Cys418–Cys432. Residues Asp434, Ile435, and Glu437 each coordinate Ca(2+). One can recognise an EGF-like 1; calcium-binding domain in the interval 434 to 475 (DIDECAAKMHYCHANTVCVNLPGLYRCDCVPGYIRVDDFSCT). Intrachain disulfides connect Cys438-Cys451, Cys445-Cys460, Cys462-Cys474, Cys480-Cys493, Cys487-Cys502, Cys504-Cys515, Cys519-Cys529, Cys523-Cys535, Cys537-Cys546, Cys553-Cys566, Cys560-Cys575, Cys577-Cys594, Cys600-Cys613, Cys607-Cys622, and Cys624-Cys630. Asn453, Leu454, and Leu457 together coordinate Ca(2+). One can recognise an EGF-like 2; calcium-binding domain in the interval 476-516 (EHDECGSGQHNCDENAICTNTVQGHSCTCKPGYVGNGTICR). A glycan (N-linked (GlcNAc...) asparagine) is linked at Asn511. Positions 517–547 (AFCEEGCRYGGTCVAPNKCVCPSGFTGSHCE) constitute an EGF-like 3 domain. Residues 549 to 587 (DIDECSEGIIECHNHSRCVNLPGWYHCECRSGFHDDGTY) form the EGF-like 4; calcium-binding domain. An N-linked (GlcNAc...) asparagine glycan is attached at Asn562. The EGF-like 5; calcium-binding domain occupies 596-631 (DIDECALRTHTCWNDSACINLAGGFDCLCPSGPSCS). Asn609 carries N-linked (GlcNAc...) asparagine glycosylation. A VWFC 2 domain is found at 692–750 (SQCLDQNGHKLYRSGDNWTHSCQQCRCLEGEVDCWPLTCPNLSCEYTAILEGECCPRCV). 3 N-linked (GlcNAc...) asparagine glycosylation sites follow: Asn708, Asn732, and Asn758.

Homotrimer. Binds to PKC beta-1. Interacts with ATRAID; the interaction promotes osteoblast cell differentiation and mineralization. Interacts with ROBO3.

The protein resides in the cytoplasm. Its subcellular location is the nucleus envelope. It localises to the secreted. Functionally, plays a role in the control of cell growth and differentiation. Promotes osteoblast cell differentiation and terminal mineralization. The protein is Protein kinase C-binding protein NELL1 (NELL1) of Homo sapiens (Human).